Here is a 1725-residue protein sequence, read N- to C-terminus: Latrophilin Cirl (1725 aa).

Topologically, residues 1–757 are extracellular; sequence MALNELGNCA…LFTMFDGNMR (757 aa). One can recognise an SUEL-type lectin domain in the interval 18–107; sequence ACEGKQLTIE…KYLEAHYQCI (90 aa). The N-linked (GlcNAc...) asparagine glycan is linked to asparagine 135. Positions 164-284 are disordered; that stretch reads AVQPTHSTPS…SAANNSVNIG (121 aa). Low complexity-rich tracts occupy residues 167 to 176 and 224 to 236; these read PTHSTPSSST and SSSS…SAGN. N-linked (GlcNAc...) asparagine glycans are attached at residues asparagine 236, asparagine 278, asparagine 326, asparagine 388, asparagine 645, asparagine 693, and asparagine 720. Positions 259–282 are enriched in polar residues; it reads LLTTKSSPNRTPGTTASAANNSVN. The interval 361–390 is disordered; the sequence is DDEYDDDLPAASSTTPQPSNNGGDCVHNSS. Positions 371-390 are enriched in polar residues; it reads ASSTTPQPSNNGGDCVHNSS. One can recognise a GAIN-B domain in the interval 551-744; the sequence is RNVVQKVKNI…AILMDVVDEH (194 aa). 2 disulfide bridges follow: cysteine 699-cysteine 726 and cysteine 714-cysteine 728. The tract at residues 699-744 is GPS; that stretch reads CVFWNYIDHAWSANGCSLESTNRTHSVCSCNHLTNFAILMDVVDEH. The chain crosses the membrane as a helical span at residues 758-778; sequence IFIYISVAICVVFIIIALLTL. The Cytoplasmic segment spans residues 779 to 791; the sequence is KLFNGVFVKSART. Residues 792–812 traverse the membrane as a helical segment; sequence SIYSSIYICLLAIELLFLLGI. The Extracellular portion of the chain corresponds to 813 to 818; sequence EQTETS. Residues 819-839 form a helical membrane-spanning segment; the sequence is IFCGFITVFLHCAILSGTAWF. The Cytoplasmic segment spans residues 840–865; that stretch reads CYEAFHSYSTLTSDELLLEVDQTPKV. A helical membrane pass occupies residues 866–886; that stretch reads NCYYLLSYGLSLSVVAISLVI. The Extracellular segment spans residues 887-910; that stretch reads DPSTYTQNDYCVLMEANALFYSTF. Residues 911 to 931 traverse the membrane as a helical segment; it reads VAPVLIFFVAAITYTFLSWII. Residues 932 to 958 lie on the Cytoplasmic side of the membrane; sequence MRRKSRTALKTKEHTRLANVRFDIRCS. A helical membrane pass occupies residues 959-979; the sequence is FVFLLLLSVVWCCAYFYLRGA. Residues 980–986 are Extracellular-facing; that stretch reads KLDEDGA. A helical membrane pass occupies residues 987-1007; sequence PIYGYCFICFNTLLGIYIFVF. The Cytoplasmic portion of the chain corresponds to 1008–1725; the sequence is HCIQNEKIRR…VRCYLEPLAK (718 aa). Residues 1056 to 1088 are disordered; it reads TANQSAGTLSKSKSKLPLGAGDEARDGDAQQQQ. Serine 1153 carries the phosphoserine modification. Disordered stretches follow at residues 1236 to 1263, 1309 to 1337, 1472 to 1555, and 1636 to 1705; these read HNNQ…LHSR, QQLQ…AEQH, GGGS…SDER, and LFGH…QARH. The span at 1237 to 1246 shows a compositional bias: basic residues; that stretch reads NNQHGKKKRG. Phosphoserine occurs at positions 1255 and 1262. The segment covering 1309-1327 has biased composition (low complexity); the sequence is QQLQQQQLRQQRQQQQQQL. Phosphoserine is present on residues serine 1328 and serine 1329. Residues 1478–1496 are compositionally biased toward low complexity; the sequence is GGSVTSRSQQQQQQQLKQK. Acidic residues-rich tracts occupy residues 1505–1522 and 1532–1543; these read DDDD…DEVT and CDDEDNESDIDD. A compositionally biased stretch (polar residues) spans 1651-1666; that stretch reads QTPAQKRQQLQKLSPQ. Positions 1667 to 1683 are enriched in low complexity; it reads STTSSSSHTSHSNPQHA. Residues 1684-1693 are compositionally biased toward basic residues; sequence PAHHLQHHHT. Positions 1694-1705 are enriched in low complexity; that stretch reads QQQQQQQQQARH.

It belongs to the G-protein coupled receptor 2 family. LN-TM7 subfamily. Forms a heterodimer, consisting of a large extracellular region non-covalently linked to a seven-transmembrane moiety. Post-translationally, proteolytically cleaved into 2 subunits, an extracellular subunit and a seven-transmembrane subunit.

It localises to the cell membrane. The polypeptide is Latrophilin Cirl (Drosophila mojavensis (Fruit fly)).